A 353-amino-acid polypeptide reads, in one-letter code: Jasmonate-induced oxygenase 4 (353 aa).

A Fe2OG dioxygenase domain is found at 202–302 (VGASLRTNFY…RVSLAFFYNP (101 aa)). Position 207 (R207) interacts with jasmonate. Residues N209 and Y211 each coordinate 2-oxoglutarate. The Fe cation site is built by H226, D228, and H283. Positions 293 and 295 each coordinate 2-oxoglutarate. Jasmonate-binding residues include R332 and R336.

It belongs to the iron/ascorbate-dependent oxidoreductase family. L-ascorbate serves as cofactor. It depends on Fe(2+) as a cofactor.

It carries out the reaction jasmonate + 2-oxoglutarate + O2 = (1R,2R)-12-hydroxyjasmonate + succinate + CO2. 2-oxoglutarate-dependent dioxygenase involved in the oxidation of jasmonate (JA), a stress-induced phytohormone synthesized in response to attack by pathogens and herbivores, which triggers the activation of defense responses via the JA-mediated signaling pathway. Converts JA to 12-hydroxyjasmonate (12OH-JA), an inactive form of JA. Is specific to free JA, and cannot oxidize the bioactive form jasmonoyl-L-isoleucine (JA-Ile) or other JA-amino acid conjugates. Prevents over-accumulation of JA and indirectly its bioactive form JA-Ile under stress response. Acts as a negative regulator of JA-mediated defense signaling, by contributing to 12OH-JA accumulation, which represses JA defense responses upon infection by the fungal pathogen Botrytis cinerea. Acts as a negative regulator of JA-mediated defense responses upon infestation by the herbivorous caterpillar Mamestra brassicae. This chain is Jasmonate-induced oxygenase 4, found in Arabidopsis thaliana (Mouse-ear cress).